The chain runs to 694 residues: Methionine--tRNA ligase (694 aa).

The short motif at 12–22 (PYANGPLHLGH) is the 'HIGH' region element. Residues cysteine 143, cysteine 146, cysteine 156, and cysteine 159 each coordinate Zn(2+). Positions 330 to 334 (KMSKS) match the 'KMSKS' region motif. Lysine 333 lines the ATP pocket. Positions 552–577 (APAAPAATTKPAPSKADAAPAAVANP) are disordered. The tRNA-binding domain maps to 591–694 (DFAKLDLRIG…AGAQPGMPVR (104 aa)).

Belongs to the class-I aminoacyl-tRNA synthetase family. MetG type 1 subfamily. In terms of assembly, homodimer. Requires Zn(2+) as cofactor.

The protein localises to the cytoplasm. It carries out the reaction tRNA(Met) + L-methionine + ATP = L-methionyl-tRNA(Met) + AMP + diphosphate. Its function is as follows. Is required not only for elongation of protein synthesis but also for the initiation of all mRNA translation through initiator tRNA(fMet) aminoacylation. In Xanthomonas campestris pv. campestris (strain B100), this protein is Methionine--tRNA ligase.